The chain runs to 513 residues: Bifunctional purine biosynthesis protein PurH (513 aa).

The region spanning 1-144 is the MGS-like domain; it reads MSKRALISVS…KNHERVGIVV (144 aa).

This sequence belongs to the PurH family.

It carries out the reaction (6R)-10-formyltetrahydrofolate + 5-amino-1-(5-phospho-beta-D-ribosyl)imidazole-4-carboxamide = 5-formamido-1-(5-phospho-D-ribosyl)imidazole-4-carboxamide + (6S)-5,6,7,8-tetrahydrofolate. It catalyses the reaction IMP + H2O = 5-formamido-1-(5-phospho-D-ribosyl)imidazole-4-carboxamide. Its pathway is purine metabolism; IMP biosynthesis via de novo pathway; 5-formamido-1-(5-phospho-D-ribosyl)imidazole-4-carboxamide from 5-amino-1-(5-phospho-D-ribosyl)imidazole-4-carboxamide (10-formyl THF route): step 1/1. It functions in the pathway purine metabolism; IMP biosynthesis via de novo pathway; IMP from 5-formamido-1-(5-phospho-D-ribosyl)imidazole-4-carboxamide: step 1/1. This Moorella thermoacetica (strain ATCC 39073 / JCM 9320) protein is Bifunctional purine biosynthesis protein PurH.